We begin with the raw amino-acid sequence, 275 residues long: Fructose-2,6-bisphosphatase TIGAR (275 aa).

The Tele-phosphohistidine intermediate role is filled by His11. Glu89 functions as the Proton donor/acceptor in the catalytic mechanism.

It belongs to the phosphoglycerate mutase family.

Its subcellular location is the cytoplasm. The protein resides in the nucleus. The protein localises to the mitochondrion. The catalysed reaction is beta-D-fructose 2,6-bisphosphate + H2O = beta-D-fructose 6-phosphate + phosphate. In terms of biological role, fructose-bisphosphatase hydrolyzing fructose-2,6-bisphosphate as well as fructose-1,6-bisphosphate. Acts as a negative regulator of glycolysis by lowering intracellular levels of fructose-2,6-bisphosphate in a p53/TP53-dependent manner, resulting in the pentose phosphate pathway (PPP) activation and NADPH production. Contributes to the generation of reduced glutathione to cause a decrease in intracellular reactive oxygen species (ROS) content, correlating with its ability to protect cells from oxidative or metabolic stress-induced cell death. May play a role in mitophagy inhibition. The protein is Fructose-2,6-bisphosphatase TIGAR of Xenopus tropicalis (Western clawed frog).